The sequence spans 1264 residues: Valine--tRNA ligase (1264 aa).

An N-acetylserine modification is found at S2. Positions 89–219 constitute a GST C-terminal domain; that stretch reads GSRAAVLVQQ…YSGARSVTQQ (131 aa). Residues 218-230 show a composition bias toward polar residues; it reads QQPGSEITAPQKT. Positions 218–296 are disordered; that stretch reads QQPGSEITAP…GEKKDVSGTM (79 aa). Composition is skewed to basic and acidic residues over residues 234–248 and 260–275; these read LKKE…EKFQ and HGEK…KRDP. Positions 344–354 match the 'HIGH' region motif; sequence PNVTGSLHLGH. 2 positions are modified to phosphoserine: S437 and S527. Residue K645 is modified to N6-acetyllysine. The short motif at 862-866 is the 'KMSKS' region element; the sequence is KMSKS. Residue K865 participates in ATP binding.

Belongs to the class-I aminoacyl-tRNA synthetase family. In terms of assembly, forms high-molecular-mass aggregates with elongation factor 1.

It catalyses the reaction tRNA(Val) + L-valine + ATP = L-valyl-tRNA(Val) + AMP + diphosphate. Can be regulated by protein kinase C-dependent phosphorylation. This Rattus norvegicus (Rat) protein is Valine--tRNA ligase (Vars1).